Here is a 451-residue protein sequence, read N- to C-terminus: Tubulin alpha-1A chain (451 aa).

The MREC motif motif lies at 1-4 (MREC). 8 residues coordinate GTP: glutamine 11, glutamate 71, serine 140, glycine 144, threonine 145, threonine 179, asparagine 206, and asparagine 228. Residue glutamate 71 coordinates Mg(2+). Glutamate 254 is a catalytic residue. Residues 432 to 451 (YEEVGVDSVEGEGEEEGEEY) form a disordered region. Glutamate 445 carries the 5-glutamyl polyglutamate modification.

This sequence belongs to the tubulin family. In terms of assembly, dimer of alpha and beta chains. A typical microtubule is a hollow water-filled tube with an outer diameter of 25 nm and an inner diameter of 15 nM. Alpha-beta heterodimers associate head-to-tail to form protofilaments running lengthwise along the microtubule wall with the beta-tubulin subunit facing the microtubule plus end conferring a structural polarity. Microtubules usually have 13 protofilaments but different protofilament numbers can be found in some organisms and specialized cells. Mg(2+) serves as cofactor. Some glutamate residues at the C-terminus are polyglycylated, resulting in polyglycine chains on the gamma-carboxyl group. Glycylation is mainly limited to tubulin incorporated into axonemes (cilia and flagella) whereas glutamylation is prevalent in neuronal cells, centrioles, axonemes, and the mitotic spindle. Both modifications can coexist on the same protein on adjacent residues, and lowering polyglycylation levels increases polyglutamylation, and reciprocally. The precise function of polyglycylation is still unclear. In terms of processing, some glutamate residues at the C-terminus are polyglutamylated, resulting in polyglutamate chains on the gamma-carboxyl group. Polyglutamylation plays a key role in microtubule severing by spastin (SPAST). SPAST preferentially recognizes and acts on microtubules decorated with short polyglutamate tails: severing activity by SPAST increases as the number of glutamates per tubulin rises from one to eight, but decreases beyond this glutamylation threshold. Post-translationally, undergoes a tyrosination/detyrosination cycle, the cyclic removal and re-addition of a C-terminal tyrosine residue by the enzymes tubulin tyrosine carboxypeptidase (MATCAP1, VASH1 or VASH2) and tubulin tyrosine ligase (TTL), respectively. Tyrosination promotes microtubule interaction with CAP-Gly microtubule plus-end tracking proteins. Tyrosinated tubulins regulate the initiation of dynein-driven motility. In terms of processing, detyrosination is involved in metaphase plate congression by guiding chromosomes during mitosis. Detyrosination increases microtubules-dependent mechanotransduction in dystrophic cardiac and skeletal muscle. In cardiomyocytes, detyrosinated microtubules are required to resist to contractile compression during contraction.

It localises to the cytoplasm. It is found in the cytoskeleton. The catalysed reaction is GTP + H2O = GDP + phosphate + H(+). Functionally, tubulin is the major constituent of microtubules, a cylinder consisting of laterally associated linear protofilaments composed of alpha- and beta-tubulin heterodimers. Microtubules grow by the addition of GTP-tubulin dimers to the microtubule end, where a stabilizing cap forms. Below the cap, tubulin dimers are in GDP-bound state, owing to GTPase activity of alpha-tubulin. The sequence is that of Tubulin alpha-1A chain (TUBA1A) from Gallus gallus (Chicken).